Consider the following 211-residue polypeptide: tRNA (guanine-N(7)-)-methyltransferase (211 aa).

4 residues coordinate S-adenosyl-L-methionine: glutamate 43, glutamate 68, aspartate 95, and aspartate 117. Aspartate 117 is a catalytic residue. Substrate is bound by residues lysine 121, aspartate 153, and 190–193 (TEYE).

Belongs to the class I-like SAM-binding methyltransferase superfamily. TrmB family.

It catalyses the reaction guanosine(46) in tRNA + S-adenosyl-L-methionine = N(7)-methylguanosine(46) in tRNA + S-adenosyl-L-homocysteine. It participates in tRNA modification; N(7)-methylguanine-tRNA biosynthesis. Functionally, catalyzes the formation of N(7)-methylguanine at position 46 (m7G46) in tRNA. The protein is tRNA (guanine-N(7)-)-methyltransferase of Staphylococcus carnosus (strain TM300).